A 255-amino-acid chain; its full sequence is Tryptophan synthase alpha chain (255 aa).

Residues Glu44 and Asp55 each act as proton acceptor in the active site.

The protein belongs to the TrpA family. As to quaternary structure, tetramer of two alpha and two beta chains.

The catalysed reaction is (1S,2R)-1-C-(indol-3-yl)glycerol 3-phosphate + L-serine = D-glyceraldehyde 3-phosphate + L-tryptophan + H2O. It functions in the pathway amino-acid biosynthesis; L-tryptophan biosynthesis; L-tryptophan from chorismate: step 5/5. The alpha subunit is responsible for the aldol cleavage of indoleglycerol phosphate to indole and glyceraldehyde 3-phosphate. This chain is Tryptophan synthase alpha chain, found in Dehalococcoides mccartyi (strain ATCC BAA-2100 / JCM 16839 / KCTC 5957 / BAV1).